Here is a 116-residue protein sequence, read N- to C-terminus: U16-barytoxin-Tl1d (116 aa).

The N-terminal stretch at 1–20 (MKTIIVFLSLLVLATKFGDA) is a signal peptide. Residues 21-74 (NEGVNQEQMKEVIQNEFREDFLNEMAAMSLLQQLEAIESTLLEKEADRNSRQKR) constitute a propeptide that is removed on maturation. 3 disulfides stabilise this stretch: Cys75/Cys90, Cys82/Cys95, and Cys89/Cys110.

This sequence belongs to the neurotoxin 14 (magi-1) family. 06 (ICK-Trit) subfamily. As to expression, expressed by the venom gland.

It is found in the secreted. Ion channel inhibitor. In Trittame loki (Brush-footed trapdoor spider), this protein is U16-barytoxin-Tl1d.